Consider the following 257-residue polypeptide: uncharacterized protein (257 aa).

The N-terminal stretch at 1-26 (MKKAFILSAAAAVGLFTFGGVQQASA) is a signal peptide. The disordered stretch occupies residues 80–135 (AKQSNVKVQDVQKTETAKPAQKTTEKAAADQNTASKAPATAEKTNTTTSAPSSVSA). Over residues 121–134 (EKTNTTTSAPSSVS) the composition is skewed to polar residues. The region spanning 141-254 (VELTNAERQK…ESGSIWTQQF (114 aa)) is the SCP domain.

This is an uncharacterized protein from Bacillus subtilis (strain 168).